Here is a 655-residue protein sequence, read N- to C-terminus: Putative phagocytic receptor 1c (655 aa).

Positions 1–20 are cleaved as a signal peptide; that stretch reads MLNIIVVLLLLFFSNNVIDS. Over residues 146 to 173 the composition is skewed to low complexity; sequence SNSKSSEITSPPSSPSSSSSSSSSPSSS. Positions 146–185 are disordered; that stretch reads SNSKSSEITSPPSSPSSSSSSSSSPSSSIEEEDDDDTEND. Acidic residues predominate over residues 174-183; sequence IEEEDDDDTE. 9 helical membrane-spanning segments follow: residues 300-320, 359-379, 387-407, 428-448, 461-481, 518-538, 550-570, 587-607, and 619-639; these read IDII…AIIL, FSII…LMVF, IATP…TGIF, SVIT…IGYF, IGTV…CSLL, MILG…FFLS, LSFA…NMII, LLGP…FGIT, and FMFS…IGFL.

It belongs to the nonaspanin (TM9SF) (TC 9.A.2) family.

It is found in the membrane. The sequence is that of Putative phagocytic receptor 1c (phg1c) from Dictyostelium discoideum (Social amoeba).